The sequence spans 51 residues: Large ribosomal subunit protein bL33 (51 aa).

This sequence belongs to the bacterial ribosomal protein bL33 family.

The sequence is that of Large ribosomal subunit protein bL33 from Francisella tularensis subsp. tularensis (strain FSC 198).